The chain runs to 554 residues: Intraflagellar transport protein 56 (554 aa).

The tract at residues 1-23 (MMLSRAKPAVGNEVQQIDKKKKK) is disordered. 4 TPR repeats span residues 57-90 (EDTE…EGCN), 92-125 (DVWV…LQNR), 151-184 (IEDQ…NRDF), and 468-501 (ANDC…EGKR).

The protein belongs to the IFT56 family. In terms of assembly, component of the IFT complex B.

It localises to the cell projection. It is found in the cilium. Component of the intraflagellar transport (IFT) complex B required for transport of proteins in the motile cilium. Required for transport of specific ciliary cargo proteins related to motility, while it is neither required for IFT complex B assembly or motion nor for cilium assembly. Plays a key role in maintaining the integrity of the IFT complex B and the proper ciliary localization of the IFT complex B components. Essential for maintaining proper microtubule organization within the ciliary axoneme. In Xenopus tropicalis (Western clawed frog), this protein is Intraflagellar transport protein 56.